The following is a 163-amino-acid chain: MHTRAIYPGTFDPITNGHADLIERAAKLFKHVIIGIAANPSKQPRFTLEERVELVNRVTAHLDNVEVVGFSGLLVDFAKEQRASVLVRGLRAVSDFEYEFQLANMNRRLSPDLESVFLTPAEENSFISSTLVKEVALHGGDVSQFVHPEVASALAAKLNLAKA.

Thr10 is a substrate binding site. ATP-binding positions include 10 to 11 (TF) and His18. Substrate contacts are provided by Lys42, Leu74, and Arg88. Residues 89–91 (GLR), Glu99, and 124–130 (NSFISST) each bind ATP.

Belongs to the bacterial CoaD family. As to quaternary structure, homohexamer. The cofactor is Mg(2+).

It is found in the cytoplasm. The catalysed reaction is (R)-4'-phosphopantetheine + ATP + H(+) = 3'-dephospho-CoA + diphosphate. Its pathway is cofactor biosynthesis; coenzyme A biosynthesis; CoA from (R)-pantothenate: step 4/5. Its function is as follows. Reversibly transfers an adenylyl group from ATP to 4'-phosphopantetheine, yielding dephospho-CoA (dPCoA) and pyrophosphate. This is Phosphopantetheine adenylyltransferase from Shewanella sp. (strain MR-4).